The sequence spans 31 residues: MPTITSYFGFLLAALTITSALFIGLSKIGLI.

Residues 4 to 24 (ITSYFGFLLAALTITSALFIG) traverse the membrane as a helical segment.

Belongs to the PetL family. The 4 large subunits of the cytochrome b6-f complex are cytochrome b6, subunit IV (17 kDa polypeptide, PetD), cytochrome f and the Rieske protein, while the 4 small subunits are PetG, PetL, PetM and PetN. The complex functions as a dimer.

It localises to the plastid. The protein resides in the chloroplast thylakoid membrane. Component of the cytochrome b6-f complex, which mediates electron transfer between photosystem II (PSII) and photosystem I (PSI), cyclic electron flow around PSI, and state transitions. PetL is important for photoautotrophic growth as well as for electron transfer efficiency and stability of the cytochrome b6-f complex. The protein is Cytochrome b6-f complex subunit 6 of Citrus sinensis (Sweet orange).